Reading from the N-terminus, the 353-residue chain is Thiamine-phosphate synthase (353 aa).

The segment at 1–128 is unknown; it reads MESMPVAPST…ARTAAAVRYA (128 aa). The segment at 129–353 is thiamine-phosphate synthase; sequence LYDHEVRILE…ASRQLLDLLT (225 aa). 4-amino-2-methyl-5-(diphosphooxymethyl)pyrimidine-binding positions include 185-189 and Asn-217; that span reads QYRRK. Asp-218 and Asp-237 together coordinate Mg(2+). 4-amino-2-methyl-5-(diphosphooxymethyl)pyrimidine is bound at residue Ser-256. Residue 282-284 participates in 2-[(2R,5Z)-2-carboxy-4-methylthiazol-5(2H)-ylidene]ethyl phosphate binding; sequence TAT. Lys-285 is a binding site for 4-amino-2-methyl-5-(diphosphooxymethyl)pyrimidine. 2-[(2R,5Z)-2-carboxy-4-methylthiazol-5(2H)-ylidene]ethyl phosphate-binding positions include Gly-312 and 332–333; that span reads VS.

This sequence belongs to the thiamine-phosphate synthase family. Mg(2+) serves as cofactor.

It carries out the reaction 2-[(2R,5Z)-2-carboxy-4-methylthiazol-5(2H)-ylidene]ethyl phosphate + 4-amino-2-methyl-5-(diphosphooxymethyl)pyrimidine + 2 H(+) = thiamine phosphate + CO2 + diphosphate. The enzyme catalyses 2-(2-carboxy-4-methylthiazol-5-yl)ethyl phosphate + 4-amino-2-methyl-5-(diphosphooxymethyl)pyrimidine + 2 H(+) = thiamine phosphate + CO2 + diphosphate. The catalysed reaction is 4-methyl-5-(2-phosphooxyethyl)-thiazole + 4-amino-2-methyl-5-(diphosphooxymethyl)pyrimidine + H(+) = thiamine phosphate + diphosphate. It participates in cofactor biosynthesis; thiamine diphosphate biosynthesis; thiamine phosphate from 4-amino-2-methyl-5-diphosphomethylpyrimidine and 4-methyl-5-(2-phosphoethyl)-thiazole: step 1/1. Condenses 4-methyl-5-(beta-hydroxyethyl)thiazole monophosphate (THZ-P) and 2-methyl-4-amino-5-hydroxymethyl pyrimidine pyrophosphate (HMP-PP) to form thiamine monophosphate (TMP). The protein is Thiamine-phosphate synthase of Synechococcus sp. (strain WH7803).